Reading from the N-terminus, the 170-residue chain is Large ribosomal subunit protein uL10 (170 aa).

The protein belongs to the universal ribosomal protein uL10 family. As to quaternary structure, part of the ribosomal stalk of the 50S ribosomal subunit. The N-terminus interacts with L11 and the large rRNA to form the base of the stalk. The C-terminus forms an elongated spine to which L12 dimers bind in a sequential fashion forming a multimeric L10(L12)X complex.

Forms part of the ribosomal stalk, playing a central role in the interaction of the ribosome with GTP-bound translation factors. The chain is Large ribosomal subunit protein uL10 from Chlamydia abortus (strain DSM 27085 / S26/3) (Chlamydophila abortus).